A 1084-amino-acid chain; its full sequence is Transcription elongation factor SPT5 (1084 aa).

A disordered region spans residues 1-91; sequence MSDSEDSDFS…DDEYEDEDPW (91 aa). Composition is skewed to acidic residues over residues 20–32, 41–62, and 77–91; these read AEEV…EEEQ, AEEE…EEDD, and DEAD…EDPW. The segment at 175–269 is interaction with SUPT4H1; the sequence is DPNLWTVKCK…TDVLKVVKEV (95 aa). 4 consecutive KOW domains span residues 272–305, 419–450, 471–502, and 593–626; these read LKPK…ISLK, LQAG…ITIM, FRMG…VILF, and IHVK…LHCK. The interval 312-419 is interaction with RNA polymerase II; it reads LDRIKARMSM…TTGKEREHNL (108 aa). Position 665 is a phosphoserine (serine 665). The tract at residues 667 to 700 is disordered; that stretch reads RISSPMHPGGGGQPQRGGGGGGGGGMGRGRGRRD. A compositionally biased stretch (gly residues) spans 674–694; that stretch reads PGGGGQPQRGGGGGGGGGMGR. The KOW 5 domain maps to 702-735; sequence DLIGQTVRISQGPYKGYIGVVKDATESTARVELH. Positions 748-973 are disordered; sequence LTTVGGKERQ…HTPGSNIDQA (226 aa). A CTR1-1; approximate repeat occupies 758 to 763; the sequence is GRSSTH. The interval 758–815 is 8 X 7 AA approximate tandem repeats of G-S-[QR]-T-P-X-[YQ], motif CTR1; that stretch reads GRSSTHLRTPMYGSQTPIYGTGSRTPMYGSQTPLHDGSRTPHYGSQTPLHDGSRTPGQ. A compositionally biased stretch (polar residues) spans 759 to 790; sequence RSSTHLRTPMYGSQTPIYGTGSRTPMYGSQTP. Residues 764 to 769 form a CTR1-2; approximate repeat; it reads LRTPMY. One copy of the CTR1-3 repeat lies at 770–776; it reads GSQTPIY. 2 positions are modified to phosphothreonine; by CDK9: threonine 773 and threonine 782. A CTR1-4 repeat occupies 779–785; the sequence is GSRTPMY. The stretch at 786-792 is one CTR1-5 repeat; that stretch reads GSQTPLH. The CTR1-6 repeat unit spans residues 794–800; sequence GSRTPHY. The stretch at 801 to 807 is one CTR1-7 repeat; the sequence is GSQTPLH. One copy of the CTR1-8 repeat lies at 809 to 815; it reads GSRTPGQ. A compositionally biased stretch (acidic residues) spans 832-842; it reads DEYEFAYDDEP. One copy of the CTR2-1 repeat lies at 842 to 849; that stretch reads PSPSPQGY. Positions 842–948 are 10 X 8 AA approximate tandem repeats of P-[TS]-P-S-P-[QA]-[SG]-Y, motif CTR2; it reads PSPSPQGYGG…ASPSPSPVGY (107 aa). The CTR2-2; approximate repeat unit spans residues 852–860; the sequence is TPNPQTPGY. The segment covering 855–864 has biased composition (pro residues); that stretch reads PQTPGYPEVP. Residues 861–867 form a CTR2-3; approximate repeat; sequence PEVPSPQ. Positions 866–888 are enriched in polar residues; sequence PQVNPQYNPQTPGTPAMYNTDQY. Residues 879–883 form a CTR2-4; half-length repeat; sequence TPAMY. A CTR2-5; approximate repeat occupies 894 to 900; the sequence is PSPQGSY. Positions 894-909 are enriched in low complexity; it reads PSPQGSYQPSPSPQSY. The stretch at 902 to 909 is one CTR2-6 repeat; that stretch reads PSPSPQSY. A CTR2-7; approximate repeat occupies 914–919; that stretch reads PSPVGY. A CTR2-8 repeat occupies 922-928; it reads THSPASY. A CTR2-9 repeat occupies 930 to 937; that stretch reads PTPSPMAY. Residues 941 to 948 form a CTR2-10 repeat; the sequence is PSPSPVGY.

Belongs to the SPT5 family. As to quaternary structure, interacts with SUPT4H1 to form the DSIF complex. DSIF interacts with RNA polymerase II and with the positive transcription elongation factor b complex (P-TEFb complex), which is composed of CDK9 and cyclin-T. Post-translationally, phosphorylated. Phosphorylation by P-TEFb (CDK9) at Thr residues of the C-terminal repeats alleviates transcriptional pausing and promotes transcription elongation.

The protein localises to the nucleus. Functionally, component of the DRB sensitivity-inducing factor complex (DSIF complex), which regulates mRNA processing and transcription elongation by RNA polymerase II. DSIF positively regulates mRNA capping by stimulating the mRNA guanylyltransferase activity of RNGTT/CAP1A. DSIF also acts cooperatively with the negative elongation factor complex (NELF complex) to enhance transcriptional pausing at sites proximal to the promoter. Transcriptional pausing may facilitate the assembly of an elongation competent RNA polymerase II complex. DSIF and NELF promote pausing by inhibition of the transcription elongation factor TFIIS/S-II. TFIIS/S-II binds to RNA polymerase II at transcription pause sites and stimulates the weak intrinsic nuclease activity of the enzyme. Cleavage of blocked transcripts by RNA polymerase II promotes the resumption of transcription from the new 3' terminus and may allow repeated attempts at transcription through natural pause sites. Following phosphorylation by CDK9, DSIF can also positively regulate transcriptional elongation. Regulation of transcriptional elongation by this protein is required for the expression of genes which control neuronal development. In Danio rerio (Zebrafish), this protein is Transcription elongation factor SPT5 (supt5h).